A 311-amino-acid polypeptide reads, in one-letter code: HPr kinase/phosphorylase (311 aa).

Active-site residues include H139 and K160. 154–161 (GQSGVGKS) contacts ATP. S161 contacts Mg(2+). D178 acts as the Proton acceptor; for phosphorylation activity. Proton donor; for dephosphorylation activity in catalysis. Residues 202–211 (LEIRGIGIID) are important for the catalytic mechanism of both phosphorylation and dephosphorylation. E203 contributes to the Mg(2+) binding site. R244 is a catalytic residue. An important for the catalytic mechanism of dephosphorylation region spans residues 265–270 (PVRPGR).

Belongs to the HPrK/P family. As to quaternary structure, homohexamer. Mg(2+) serves as cofactor.

The enzyme catalyses [HPr protein]-L-serine + ATP = [HPr protein]-O-phospho-L-serine + ADP + H(+). It catalyses the reaction [HPr protein]-O-phospho-L-serine + phosphate + H(+) = [HPr protein]-L-serine + diphosphate. In terms of biological role, catalyzes the ATP- as well as the pyrophosphate-dependent phosphorylation of a specific serine residue in HPr, a phosphocarrier protein of the phosphoenolpyruvate-dependent sugar phosphotransferase system (PTS). HprK/P also catalyzes the pyrophosphate-producing, inorganic phosphate-dependent dephosphorylation (phosphorolysis) of seryl-phosphorylated HPr (P-Ser-HPr). The two antagonistic activities of HprK/P are regulated by several intracellular metabolites, which change their concentration in response to the absence or presence of rapidly metabolisable carbon sources (glucose, fructose, etc.) in the growth medium. Therefore, by controlling the phosphorylation state of HPr, HPrK/P is a sensor enzyme that plays a major role in the regulation of carbon metabolism and sugar transport: it mediates carbon catabolite repression (CCR), and regulates PTS-catalyzed carbohydrate uptake and inducer exclusion. This Exiguobacterium sp. (strain ATCC BAA-1283 / AT1b) protein is HPr kinase/phosphorylase.